The sequence spans 183 residues: Small ribosomal subunit protein cS23y (183 aa).

This sequence belongs to the chloroplast-specific ribosomal protein cS23 family. In terms of assembly, part of the 30S ribosomal subunit.

The protein resides in the plastid. The protein localises to the chloroplast. Component of the chloroplast ribosome (chloro-ribosome), a dedicated translation machinery responsible for the synthesis of chloroplast genome-encoded proteins, including proteins of the transcription and translation machinery and components of the photosynthetic apparatus. The sequence is that of Small ribosomal subunit protein cS23y from Arabidopsis thaliana (Mouse-ear cress).